We begin with the raw amino-acid sequence, 77 residues long: Large ribosomal subunit protein eL14 (77 aa).

Belongs to the eukaryotic ribosomal protein eL14 family.

This chain is Large ribosomal subunit protein eL14, found in Methanococcus maripaludis (strain C7 / ATCC BAA-1331).